The primary structure comprises 170 residues: Cytochrome b6-f complex subunit 4 (170 aa).

3 consecutive transmembrane segments (helical) span residues 46–66 (LLFM…GLSV), 105–125 (LLGI…PFIE), and 141–161 (TVFL…TLPL).

The protein belongs to the cytochrome b family. PetD subfamily. As to quaternary structure, the 4 large subunits of the cytochrome b6-f complex are cytochrome b6, subunit IV (17 kDa polypeptide, PetD), cytochrome f and the Rieske protein, while the 4 small subunits are PetG, PetL, PetM and PetN. The complex functions as a dimer.

It localises to the cellular thylakoid membrane. Component of the cytochrome b6-f complex, which mediates electron transfer between photosystem II (PSII) and photosystem I (PSI), cyclic electron flow around PSI, and state transitions. The chain is Cytochrome b6-f complex subunit 4 from Synechococcus sp. (strain JA-2-3B'a(2-13)) (Cyanobacteria bacterium Yellowstone B-Prime).